A 346-amino-acid polypeptide reads, in one-letter code: Flap endonuclease 1 (346 aa).

An N-domain region spans residues 1–102 (MGVTELGKLI…AEIEERRKVK (102 aa)). The Mg(2+) site is built by D31, D84, E156, E158, D177, D179, and D239. Positions 120-261 (DVAKYMKRAV…KALKLVWEFG (142 aa)) are I-domain.

It belongs to the XPG/RAD2 endonuclease family. FEN1 subfamily. In terms of assembly, interacts with PCNA. PCNA stimulates the nuclease activity without altering cleavage specificity. The cofactor is Mg(2+).

Functionally, structure-specific nuclease with 5'-flap endonuclease and 5'-3' exonuclease activities involved in DNA replication and repair. During DNA replication, cleaves the 5'-overhanging flap structure that is generated by displacement synthesis when DNA polymerase encounters the 5'-end of a downstream Okazaki fragment. Binds the unpaired 3'-DNA end and kinks the DNA to facilitate 5' cleavage specificity. Cleaves one nucleotide into the double-stranded DNA from the junction in flap DNA, leaving a nick for ligation. Also involved in the base excision repair (BER) pathway. Acts as a genome stabilization factor that prevents flaps from equilibrating into structures that lead to duplications and deletions. Also possesses 5'-3' exonuclease activity on nicked or gapped double-stranded DNA. In Pyrobaculum islandicum (strain DSM 4184 / JCM 9189 / GEO3), this protein is Flap endonuclease 1.